The chain runs to 322 residues: Thiamine thiazole synthase (322 aa).

Residues Cys84, 105 to 106 (EA), Gly113, and Val178 each bind substrate. Residue Cys211 is modified to 2,3-didehydroalanine (Cys). Residues Asp213, His228, Met280, and 290 to 292 (RMG) each bind substrate.

This sequence belongs to the THI4 family. In terms of assembly, homooctamer. The cofactor is Fe cation. Post-translationally, during the catalytic reaction, a sulfide is transferred from Cys-211 to a reaction intermediate, generating a dehydroalanine residue.

The protein resides in the cytoplasm. It is found in the nucleus. It catalyses the reaction [ADP-thiazole synthase]-L-cysteine + glycine + NAD(+) = [ADP-thiazole synthase]-dehydroalanine + ADP-5-ethyl-4-methylthiazole-2-carboxylate + nicotinamide + 3 H2O + 2 H(+). Involved in biosynthesis of the thiamine precursor thiazole. Catalyzes the conversion of NAD and glycine to adenosine diphosphate 5-(2-hydroxyethyl)-4-methylthiazole-2-carboxylic acid (ADT), an adenylated thiazole intermediate. The reaction includes an iron-dependent sulfide transfer from a conserved cysteine residue of the protein to a thiazole intermediate. The enzyme can only undergo a single turnover, which suggests it is a suicide enzyme. May have additional roles in adaptation to various stress conditions and in DNA damage tolerance. In Fusarium vanettenii (strain ATCC MYA-4622 / CBS 123669 / FGSC 9596 / NRRL 45880 / 77-13-4) (Fusarium solani subsp. pisi), this protein is Thiamine thiazole synthase.